The primary structure comprises 965 residues: Valine--tRNA ligase (965 aa).

Residues 1-22 are disordered; that stretch reads MENTPSHINKTEPSLDKTYSPQ. Positions 56–66 match the 'HIGH' region motif; it reads PNVTGSLHMGH. Positions 568–572 match the 'KMSKS' region motif; it reads KMSKS. K571 is an ATP binding site. Positions 896 to 965 form a coiled coil; sequence LIDKATELDR…IEQQATIAAL (70 aa).

The protein belongs to the class-I aminoacyl-tRNA synthetase family. ValS type 1 subfamily. In terms of assembly, monomer.

It localises to the cytoplasm. It catalyses the reaction tRNA(Val) + L-valine + ATP = L-valyl-tRNA(Val) + AMP + diphosphate. Its function is as follows. Catalyzes the attachment of valine to tRNA(Val). As ValRS can inadvertently accommodate and process structurally similar amino acids such as threonine, to avoid such errors, it has a 'posttransfer' editing activity that hydrolyzes mischarged Thr-tRNA(Val) in a tRNA-dependent manner. The protein is Valine--tRNA ligase of Yersinia pestis.